A 262-amino-acid chain; its full sequence is MSRIHPTAIVEPGAQLDESVEVGPYAVIGAHVTIGARTTVGSHSVIEGHTTLGEDNRIGHYASVGGRPQDMKYKDEPTRLVIGSRNTIREFTTIHTGTVQDSGVTTLGDDNWIMAYVHIGHDCHVGNNVILSSNAQMAGHVIIGDHAIVGGMSGVHQFVRIGAHSMLGGASALVQDIPPFVIAAGNKAEPHGINVEGLRRRGFSPDAISALRAAYRVLYKNGLSLEEAKVQLRELASAGGDGDEPVQTLLAFVEASQRGIIR.

Belongs to the transferase hexapeptide repeat family. LpxA subfamily. Homotrimer.

Its subcellular location is the cytoplasm. The enzyme catalyses a (3R)-hydroxyacyl-[ACP] + UDP-N-acetyl-alpha-D-glucosamine = a UDP-3-O-[(3R)-3-hydroxyacyl]-N-acetyl-alpha-D-glucosamine + holo-[ACP]. The protein operates within glycolipid biosynthesis; lipid IV(A) biosynthesis; lipid IV(A) from (3R)-3-hydroxytetradecanoyl-[acyl-carrier-protein] and UDP-N-acetyl-alpha-D-glucosamine: step 1/6. Involved in the biosynthesis of lipid A, a phosphorylated glycolipid that anchors the lipopolysaccharide to the outer membrane of the cell. This Paraburkholderia xenovorans (strain LB400) protein is Acyl-[acyl-carrier-protein]--UDP-N-acetylglucosamine O-acyltransferase.